We begin with the raw amino-acid sequence, 135 residues long: BolA-like protein 1 (135 aa).

Residue Ser81 is modified to Phosphoserine. The disordered stretch occupies residues 114–135; the sequence is WKENPQLDTSPACLGGSKKSRN.

This sequence belongs to the BolA/IbaG family. In terms of assembly, interacts with GLRX5.

It localises to the mitochondrion. In terms of biological role, acts as a mitochondrial iron-sulfur (Fe-S) cluster assembly factor that facilitates (Fe-S) cluster insertion into a subset of mitochondrial proteins. Probably acts together with the monothiol glutaredoxin GLRX5. May protect cells against oxidative stress. This is BolA-like protein 1 (BOLA1) from Bos taurus (Bovine).